Reading from the N-terminus, the 300-residue chain is Haloalkane dehalogenase (300 aa).

The 124-residue stretch at 32 to 155 (AIVFQHGNPT…PAVRGVFQGF (124 aa)) folds into the AB hydrolase-1 domain. Aspartate 109 acts as the Nucleophile in catalysis. The active-site Proton donor is glutamate 133. Histidine 273 (proton acceptor) is an active-site residue.

It belongs to the haloalkane dehalogenase family. Type 2 subfamily. As to quaternary structure, monomer.

It carries out the reaction 1-haloalkane + H2O = a halide anion + a primary alcohol + H(+). Its function is as follows. Catalyzes hydrolytic cleavage of carbon-halogen bonds in halogenated aliphatic compounds, leading to the formation of the corresponding primary alcohols, halide ions and protons. The sequence is that of Haloalkane dehalogenase from Mycobacterium bovis (strain BCG / Pasteur 1173P2).